Consider the following 255-residue polypeptide: tRNA uridine(34) hydroxylase (255 aa).

Residues 131–225 (AAPDTLVLDT…YLEEVPEAQS (95 aa)) form the Rhodanese domain. Cys185 (cysteine persulfide intermediate) is an active-site residue.

This sequence belongs to the TrhO family.

It catalyses the reaction uridine(34) in tRNA + AH2 + O2 = 5-hydroxyuridine(34) in tRNA + A + H2O. In terms of biological role, catalyzes oxygen-dependent 5-hydroxyuridine (ho5U) modification at position 34 in tRNAs. The polypeptide is tRNA uridine(34) hydroxylase (Bradyrhizobium diazoefficiens (strain JCM 10833 / BCRC 13528 / IAM 13628 / NBRC 14792 / USDA 110)).